The primary structure comprises 600 residues: Probable tripeptidyl-peptidase SED4 (600 aa).

The signal sequence occupies residues 1 to 22; the sequence is MVSFTLRAIGACLIGLPALITA. A propeptide spans 23 to 202 (removed in mature form); the sequence is APTSHVSNGF…SVFTSDLEMT (180 aa). 2 N-linked (GlcNAc...) asparagine glycosylation sites follow: asparagine 210 and asparagine 281. The Peptidase S53 domain occupies 212 to 600; the sequence is TITPDCIREL…FEKLSKLVLI (389 aa). Residues glutamate 288 and aspartate 292 each act as charge relay system in the active site. Residues asparagine 323 and asparagine 404 are each glycosylated (N-linked (GlcNAc...) asparagine). Serine 504 (charge relay system) is an active-site residue. Residues aspartate 546, isoleucine 547, glycine 579, and aspartate 581 each contribute to the Ca(2+) site.

Ca(2+) serves as cofactor.

It localises to the secreted. It is found in the extracellular space. The enzyme catalyses Release of an N-terminal tripeptide from a polypeptide.. In terms of biological role, secreted tripeptidyl-peptidase which degrades proteins at acidic pHs and is involved in virulence. This chain is Probable tripeptidyl-peptidase SED4 (SED4), found in Trichophyton verrucosum (strain HKI 0517).